A 664-amino-acid polypeptide reads, in one-letter code: ATP synthase subunit alpha 2 (664 aa).

Gly-180 to Thr-187 contributes to the ATP binding site. The tract at residues Met-525–Arg-664 is disordered. The span at Ala-543–Ala-588 shows a compositional bias: basic and acidic residues. A compositionally biased stretch (low complexity) spans Ala-589–Pro-599. Residues Ala-621–Ala-639 show a composition bias toward basic and acidic residues.

This sequence belongs to the ATPase alpha/beta chains family. F-type ATPases have 2 components, CF(1) - the catalytic core - and CF(0) - the membrane proton channel. CF(1) has five subunits: alpha(3), beta(3), gamma(1), delta(1), epsilon(1). CF(0) has three main subunits: a(1), b(2) and c(9-12). The alpha and beta chains form an alternating ring which encloses part of the gamma chain. CF(1) is attached to CF(0) by a central stalk formed by the gamma and epsilon chains, while a peripheral stalk is formed by the delta and b chains.

The protein localises to the cell inner membrane. The catalysed reaction is ATP + H2O + 4 H(+)(in) = ADP + phosphate + 5 H(+)(out). Produces ATP from ADP in the presence of a proton gradient across the membrane. The alpha chain is a regulatory subunit. This is ATP synthase subunit alpha 2 from Burkholderia pseudomallei (strain 1710b).